The chain runs to 351 residues: Histidinol-phosphate aminotransferase (351 aa).

Position 221 is an N6-(pyridoxal phosphate)lysine (lysine 221).

This sequence belongs to the class-II pyridoxal-phosphate-dependent aminotransferase family. Histidinol-phosphate aminotransferase subfamily. As to quaternary structure, homodimer. Pyridoxal 5'-phosphate serves as cofactor.

It carries out the reaction L-histidinol phosphate + 2-oxoglutarate = 3-(imidazol-4-yl)-2-oxopropyl phosphate + L-glutamate. The protein operates within amino-acid biosynthesis; L-histidine biosynthesis; L-histidine from 5-phospho-alpha-D-ribose 1-diphosphate: step 7/9. This is Histidinol-phosphate aminotransferase from Staphylococcus saprophyticus subsp. saprophyticus (strain ATCC 15305 / DSM 20229 / NCIMB 8711 / NCTC 7292 / S-41).